Reading from the N-terminus, the 482-residue chain is Transcription factor Sox-9 (482 aa).

2 disordered regions span residues 1 to 66 and 160 to 274; these read MNLL…ETED and RLRI…FRDV. Low complexity predominate over residues 30–41; the sequence is SAGSPCPSGSGS. Polar residues predominate over residues 42–52; sequence DTENTRPQENT. Composition is skewed to basic and acidic residues over residues 56 to 66 and 160 to 174; these read GDPELKKETED and RLRI…DYKY. A Glycyl lysine isopeptide (Lys-Gly) (interchain with G-Cter in SUMO) cross-link involves residue Lys61. The dimerization (DIM) stretch occupies residues 63–103; it reads ETEDEKFPVCIREAVSQVLKGYDWTLVPMPVRVNGSSKSKP. The PQA stretch occupies residues 63-103; it reads ETEDEKFPVCIREAVSQVLKGYDWTLVPMPVRVNGSSKSKP. The segment at residues 105–173 is a DNA-binding region (HMG box); that stretch reads VKRPMNAFMV…QHKKDHPDYK (69 aa). Over residues 211-220 the composition is skewed to polar residues; it reads SPHSASSMSE. The interval 224–308 is transactivation domain (TAM); that stretch reads PGEHSGQSQG…LPPNGHPGVG (85 aa). 2 consecutive short sequence motifs (9aaTAD) follow at residues 276–285 and 291–299; these read IGELSSEVIS and DVNEFDQYL. The tract at residues 295 to 395 is disordered; that stretch reads FDQYLPPNGH…HSPQQLNYSS (101 aa). Composition is skewed to polar residues over residues 308-326 and 351-366; these read GSTQ…TPSA and HSLS…SQQR. Residues 366–482 form a transactivation domain (TAC) region; it reads RTHIKTEQLS…QPVYTQLTRP (117 aa). Residue Lys370 forms a Glycyl lysine isopeptide (Lys-Gly) (interchain with G-Cter in SUMO) linkage. The span at 375 to 390 shows a compositional bias: low complexity; that stretch reads SPSHYSDQQQQHSPQQ. Positions 433-441 match the 9aaTAD 3 motif; that stretch reads SGLYSNFSY. Residues 448–482 form a disordered region; the sequence is PMYTPIADTTGVPSIPQTHSPQHWEQPVYTQLTRP. Over residues 458–482 the composition is skewed to polar residues; that stretch reads GVPSIPQTHSPQHWEQPVYTQLTRP.

In terms of assembly, interacts with the sumoylation factors ube2i/ubc9 and sumo1. Post-translationally, sumoylated. Lys-370 is the major site of sumoylation, although sumoylation at Lys-61 also occurs. Sumoylation plays a key role in regulating formation of the neural crest and otic placode. In terms of tissue distribution, expressed in both male and female gonads from after metamorphosis through to adult stages. In the testis, expression is restricted to the supporting Sertoli-like cells. Conversely in the ovary, expression is localized to primary oocytes (at protein level). In developing limbs, expressed before chrondrocytes form (stage 52 tadpoles) and throughout the cartilaginous anlagen until stage 56, after which expression ceases in the enlarged cells of the diaphysis. At later stages, expression continues in the chondrocytes of the epiphysis and metaphysis, and weak expression is seen in most of the diaphysis.

The protein localises to the nucleus. It localises to the cytoplasm. Functionally, transcription factor that plays a key role in chondrocytes differentiation and skeletal development. Specifically binds the 5'-ACAAAG-3' DNA motif present in enhancers and super-enhancers and promotes expression of genes important for chondrogenesis, including COL2A1. Plays a central role in successive steps of chondrocyte differentiation. Absolutely required for precartilaginous condensation, the first step in chondrogenesis during which skeletal progenitors differentiate into prechondrocytes. Together with SOX5 and SOX6, required for overt chondrogenesis when condensed prechondrocytes differentiate into early stage chondrocytes, the second step in chondrogenesis. Later, required to direct hypertrophic maturation and block osteoblast differentiation of growth plate chondrocytes: maintains chondrocyte columnar proliferation, delays prehypertrophy and then prevents osteoblastic differentiation of chondrocytes. Also required for chondrocyte hypertrophy, both indirectly, by keeping the lineage fate of chondrocytes, and directly, by remaining present in upper hypertrophic cells. Low lipid levels are the main nutritional determinant for chondrogenic commitment of skeletal progenitor cells: when lipids levels are low, FOXO transcription factors promote expression of SOX9, which induces chondrogenic commitment and suppresses fatty acid oxidation. In addition to cartilage development, also acts as a regulator of proliferation and differentiation in epithelial stem/progenitor cells. Unlikely to play a role in sex determination but may function during testicular and ovarian differentiation. This chain is Transcription factor Sox-9, found in Xenopus tropicalis (Western clawed frog).